The chain runs to 274 residues: Triosephosphate isomerase (274 aa).

Residue 13 to 15 (NWK) participates in substrate binding. Residue His98 is the Electrophile of the active site. Glu170 functions as the Proton acceptor in the catalytic mechanism. Residues Gly176 and Ser216 each contribute to the substrate site.

The protein belongs to the triosephosphate isomerase family. As to quaternary structure, homodimer.

It is found in the cytoplasm. It catalyses the reaction D-glyceraldehyde 3-phosphate = dihydroxyacetone phosphate. The protein operates within carbohydrate biosynthesis; gluconeogenesis. Its pathway is carbohydrate degradation; glycolysis; D-glyceraldehyde 3-phosphate from glycerone phosphate: step 1/1. Its function is as follows. Involved in the gluconeogenesis. Catalyzes stereospecifically the conversion of dihydroxyacetone phosphate (DHAP) to D-glyceraldehyde-3-phosphate (G3P). This chain is Triosephosphate isomerase, found in Onion yellows phytoplasma (strain OY-M).